A 65-amino-acid chain; its full sequence is Weak neurotoxin 8 (65 aa).

Intrachain disulfides connect Cys-3-Cys-24, Cys-6-Cys-11, Cys-17-Cys-42, Cys-46-Cys-57, and Cys-58-Cys-63.

The protein belongs to the three-finger toxin family. Ancestral subfamily. Orphan group II sub-subfamily. In terms of tissue distribution, expressed by the venom gland.

It localises to the secreted. Binds with low affinity to muscular (alpha-1-beta-1-delta-epsilon/CHRNA1-CHRNB1-CHRND-CHRNE) and very low affinity to neuronal (alpha-7/CHRNA7) nicotinic acetylcholine receptor (nAChR). In Naja naja (Indian cobra), this protein is Weak neurotoxin 8.